We begin with the raw amino-acid sequence, 476 residues long: Bifunctional protein HldE (476 aa).

Positions 1–318 (MKVTLPDFRR…ENAIRGRAET (318 aa)) are ribokinase. 195–198 (NLSE) is an ATP binding site. Residue aspartate 264 is part of the active site. The cytidylyltransferase stretch occupies residues 344-476 (MTNGIFDILH…IIQSIKNGLG (133 aa)).

The protein in the N-terminal section; belongs to the carbohydrate kinase PfkB family. It in the C-terminal section; belongs to the cytidylyltransferase family. Homodimer.

It catalyses the reaction D-glycero-beta-D-manno-heptose 7-phosphate + ATP = D-glycero-beta-D-manno-heptose 1,7-bisphosphate + ADP + H(+). The enzyme catalyses D-glycero-beta-D-manno-heptose 1-phosphate + ATP + H(+) = ADP-D-glycero-beta-D-manno-heptose + diphosphate. Its pathway is nucleotide-sugar biosynthesis; ADP-L-glycero-beta-D-manno-heptose biosynthesis; ADP-L-glycero-beta-D-manno-heptose from D-glycero-beta-D-manno-heptose 7-phosphate: step 1/4. The protein operates within nucleotide-sugar biosynthesis; ADP-L-glycero-beta-D-manno-heptose biosynthesis; ADP-L-glycero-beta-D-manno-heptose from D-glycero-beta-D-manno-heptose 7-phosphate: step 3/4. Catalyzes the phosphorylation of D-glycero-D-manno-heptose 7-phosphate at the C-1 position to selectively form D-glycero-beta-D-manno-heptose-1,7-bisphosphate. In terms of biological role, catalyzes the ADP transfer from ATP to D-glycero-beta-D-manno-heptose 1-phosphate, yielding ADP-D-glycero-beta-D-manno-heptose. In Yersinia enterocolitica serotype O:8 / biotype 1B (strain NCTC 13174 / 8081), this protein is Bifunctional protein HldE.